The primary structure comprises 256 residues: Protein FixA (256 aa).

Belongs to the ETF beta-subunit/FixA family. As to quaternary structure, heterodimer of FixA and FixB.

Its pathway is amine and polyamine metabolism; carnitine metabolism. Required for anaerobic carnitine reduction. May bring reductant to CaiA. This is Protein FixA from Escherichia coli O7:K1 (strain IAI39 / ExPEC).